The following is a 143-amino-acid chain: Large ribosomal subunit protein uL11 (143 aa).

Belongs to the universal ribosomal protein uL11 family. As to quaternary structure, part of the ribosomal stalk of the 50S ribosomal subunit. Interacts with L10 and the large rRNA to form the base of the stalk. L10 forms an elongated spine to which L12 dimers bind in a sequential fashion forming a multimeric L10(L12)X complex. One or more lysine residues are methylated.

In terms of biological role, forms part of the ribosomal stalk which helps the ribosome interact with GTP-bound translation factors. The chain is Large ribosomal subunit protein uL11 from Albidiferax ferrireducens (strain ATCC BAA-621 / DSM 15236 / T118) (Rhodoferax ferrireducens).